The sequence spans 231 residues: MAKLTKRQKAIAAAVEANKVYTLEEAVQVLNSLPAAKFKESLDISVNLGVDPRKSDQVVRGATTLPAGTGKTVRVAVFAQGAQAEAAKEAGADVVGFDDLAESIQGGNLDFDVVIAAPDAMRVVGKLGTILGPRGLMPNPKVGTVTPDVAGAVKNAKSGQARYRVDKAGIIHAAIGQVGFDAAAIRQNVETLVADLKKLKPATSKGVYIKKITLSSTMGPGLTVDVNNVSN.

Belongs to the universal ribosomal protein uL1 family. Part of the 50S ribosomal subunit.

Functionally, binds directly to 23S rRNA. The L1 stalk is quite mobile in the ribosome, and is involved in E site tRNA release. In terms of biological role, protein L1 is also a translational repressor protein, it controls the translation of the L11 operon by binding to its mRNA. This chain is Large ribosomal subunit protein uL1, found in Acinetobacter baumannii (strain AB307-0294).